Consider the following 147-residue polypeptide: Large ribosomal subunit protein uL16 (147 aa).

The protein belongs to the universal ribosomal protein uL16 family. In terms of assembly, part of the 50S ribosomal subunit.

Functionally, binds 23S rRNA and is also seen to make contacts with the A and possibly P site tRNAs. The chain is Large ribosomal subunit protein uL16 from Lactobacillus delbrueckii subsp. bulgaricus (strain ATCC 11842 / DSM 20081 / BCRC 10696 / JCM 1002 / NBRC 13953 / NCIMB 11778 / NCTC 12712 / WDCM 00102 / Lb 14).